A 726-amino-acid chain; its full sequence is Tripartite terminase subunit 1 (726 aa).

Residues 189–217 (CMKCYEELTLTPNQGKSLRRRLHGKFCNH) form a C3H1-type zinc finger. 626 to 633 (YNDVFGKR) serves as a coordination point for ATP.

This sequence belongs to the herpesviridae TRM1 protein family. As to quaternary structure, associates with TRM2 and TRM3 to form the tripartite terminase complex. Interacts with portal protein.

Its subcellular location is the host nucleus. In terms of biological role, component of the molecular motor that translocates viral genomic DNA in empty capsid during DNA packaging. Forms a tripartite terminase complex together with TRM2 and TRM3 in the host cytoplasm. Once the complex reaches the host nucleus, it interacts with the capsid portal vertex. This portal forms a ring in which genomic DNA is translocated into the capsid. TRM1 carries an endonuclease activity that plays an important role for the cleavage of concatemeric viral DNA into unit length genomes. The sequence is that of Tripartite terminase subunit 1 from Homo sapiens (Human).